The primary structure comprises 116 residues: NAD(P)H-quinone oxidoreductase subunit M (116 aa).

It belongs to the complex I NdhM subunit family. As to quaternary structure, NDH-1 can be composed of about 15 different subunits; different subcomplexes with different compositions have been identified which probably have different functions.

The protein localises to the cellular thylakoid membrane. The enzyme catalyses a plastoquinone + NADH + (n+1) H(+)(in) = a plastoquinol + NAD(+) + n H(+)(out). The catalysed reaction is a plastoquinone + NADPH + (n+1) H(+)(in) = a plastoquinol + NADP(+) + n H(+)(out). In terms of biological role, NDH-1 shuttles electrons from an unknown electron donor, via FMN and iron-sulfur (Fe-S) centers, to quinones in the respiratory and/or the photosynthetic chain. The immediate electron acceptor for the enzyme in this species is believed to be plastoquinone. Couples the redox reaction to proton translocation, and thus conserves the redox energy in a proton gradient. Cyanobacterial NDH-1 also plays a role in inorganic carbon-concentration. The sequence is that of NAD(P)H-quinone oxidoreductase subunit M from Synechococcus sp. (strain RCC307).